The following is a 971-amino-acid chain: Translation initiation factor IF-2 (971 aa).

Residues 48-63 are compositionally biased toward basic and acidic residues; the sequence is DHLRKSHGATDGDKRK. 2 disordered regions span residues 48–86 and 101–381; these read DHLR…ARTI and DVAE…STFQ. Over residues 105-114 the composition is skewed to low complexity; sequence GADQGQAQVA. The segment covering 121 to 181 has biased composition (basic and acidic residues); it reads ELKRREEEAR…EEEAATKRAA (61 aa). Low complexity predominate over residues 182–203; that stretch reads AEAAAAQQQAAAQQAAAEQEAT. The segment covering 210-261 has biased composition (basic and acidic residues); it reads DEARAAAERAAQREAAKKAEDAAREAADKARAEQEEISKRRAAAEAEARAIR. Residues 277–286 show a composition bias toward pro residues; sequence PPKPVEPPKP. Over residues 304–326 the composition is skewed to low complexity; that stretch reads ARPAVKKPAGAAAPATTQAPAGA. The segment covering 356 to 369 has biased composition (gly residues); the sequence is SSGGVDRGWRGGPK. Residues 471 to 640 enclose the tr-type G domain; that stretch reads PRPPVVTVMG…LLQAEVLELK (170 aa). The tract at residues 480–487 is G1; it reads GHVDHGKT. A GTP-binding site is contributed by 480-487; it reads GHVDHGKT. A G2 region spans residues 505-509; it reads GITQH. The tract at residues 526 to 529 is G3; the sequence is DTPG. Residues 526–530 and 580–583 contribute to the GTP site; these read DTPGH and NKID. A G4 region spans residues 580–583; the sequence is NKID. The G5 stretch occupies residues 616–618; the sequence is SAK.

It belongs to the TRAFAC class translation factor GTPase superfamily. Classic translation factor GTPase family. IF-2 subfamily.

The protein resides in the cytoplasm. Functionally, one of the essential components for the initiation of protein synthesis. Protects formylmethionyl-tRNA from spontaneous hydrolysis and promotes its binding to the 30S ribosomal subunits. Also involved in the hydrolysis of GTP during the formation of the 70S ribosomal complex. The polypeptide is Translation initiation factor IF-2 (Burkholderia orbicola (strain MC0-3)).